The following is a 390-amino-acid chain: MDFWLWPLYFLPVSGALRILPEVKVEGELGGSVTIKCPLPEMHVRIYLCREMAGSGTCGTVVSTTNFIKAEYKGRVTLKQYPRKNLFLVEVTQLTESDSGVYACGAGMNTDRGKTQKVTLNVHSEYEPSWEEQPMPETPKWFHLPYLFQMPAYASSSKFVTRVTTPAQRGKVPPVHHSSPTTQITHRPRVSRASSVAGDKPRTFLPSTTASKISALEGLLKPQTPSYNHHTRLHRQRALDYGSQSGREGQGFHILIPTILGLFLLALLGLVVKRAVERRKALSRRARRLAVRMRALESSQRPRGSPRPRSQNNIYSACPRRARGADAAGTGEAPVPGPGAPLPPAPLQVSESPWLHAPSLKTSCEYVSLYHQPAAMMEDSDSDDYINVPA.

The N-terminal stretch at 1 to 16 is a signal peptide; that stretch reads MDFWLWPLYFLPVSGA. The Extracellular portion of the chain corresponds to 17-251; the sequence is LRILPEVKVE…GSQSGREGQG (235 aa). The 101-residue stretch at 23-123 folds into the Ig-like domain; it reads VKVEGELGGS…KTQKVTLNVH (101 aa). The interval 33–115 is CDR4; the sequence is VTIKCPLPEM…AGMNTDRGKT (83 aa). Cystine bridges form between Cys-37-Cys-104 and Cys-49-Cys-58. Residues 40–45 form a CDR1 region; the sequence is PEMHVR. Residues 59–70 are CDR2; it reads GTVVSTTNFIKA. Phosphothreonine is present on Thr-92. Residues 106–115 form a CDR3 region; sequence AGMNTDRGKT. Positions 166-204 are disordered; sequence PAQRGKVPPVHHSSPTTQITHRPRVSRASSVAGDKPRTF. A helical transmembrane segment spans residues 252-272; that stretch reads FHILIPTILGLFLLALLGLVV. Residues 273 to 390 lie on the Cytoplasmic side of the membrane; it reads KRAVERRKAL…DSDDYINVPA (118 aa). Low complexity-rich tracts occupy residues 293-311 and 325-334; these read MRALESSQRPRGSPRPRSQ and ADAAGTGEAP. Positions 293–348 are disordered; the sequence is MRALESSQRPRGSPRPRSQNNIYSACPRRARGADAAGTGEAPVPGPGAPLPPAPLQ. The segment covering 335–346 has biased composition (pro residues); it reads VPGPGAPLPPAP.

Interacts (via Ig-like domain) with IGHM (via CH4/Cmu4 domain), both secreted and membrane-bound IgM; the interaction is glycan-independent and multivalent theoretically involving up to eight binding sites for the IgM pentamer. In terms of processing, phosphorylated on both Tyr and Ser residues. Post-translationally, O-glycosylated. Sialylated. O-linked glycans regulate trafficking to the plasma membrane. Expressed by CD19-positive B cells and CD4-positive and CD8-positive T cell populations in primary and secondary lymphoid tissues (at protein level). Among B cell subsets, detected in a subset of bone marrow pro- and pre-B cells, in most follicular and memory B cells and in a small subset of germinal center B cells (at protein level). Expressed at lower levels in CD56-positive NK cells (at protein level). Expressed in lymph nodes, lung, thymus and kidneys. Very weak expression detected in spleen, liver, heart, and salivary gland.

The protein resides in the cell membrane. Its subcellular location is the early endosome membrane. The protein localises to the golgi apparatus. It is found in the trans-Golgi network membrane. It localises to the lysosome membrane. The protein resides in the secreted. High-affinity Fc receptor for immunoglobulin M (IgM), both secreted and membrane-bound IgM. Primarily regulates IgM transport and homeostasis. In lymphoid cells, enables exocytosis of membrane-bound IgM on the plasma membrane as well as endocytosis of IgM-antigen complexes toward lysosomes for degradation. In mucosal epithelium, mediates retrotranscytosis of antigen-IgM complexes across mucosal M cells toward antigen-presenting cells in mucosal lymphoid tissues. Triggers costimulatory signaling and mediates most of IgM effector functions involved in B cell development and primary immune response to infection. Likely limits tonic IgM BCR signaling to self-antigens for proper negative selection of autoreactive B cells in the bone marrow and for the maintenance of regulatory B cell pool in peripheral lymphoid organs. Mediates antibody responses to T cell-dependent and T cell-independent antigens and promotes induction of an efficient neutralizing IgG response. Engages in cross-talk with antigen-receptor signaling via the non-canonical NF-kappa-B, MAP kinases and calcium signaling pathways. The sequence is that of Immunoglobulin mu Fc receptor from Homo sapiens (Human).